Consider the following 344-residue polypeptide: Small ribosomal subunit protein mS38 (344 aa).

Disordered regions lie at residues 1-27 (MIPQ…ASSA), 43-101 (ALQK…SVPS), and 325-344 (KKYK…QDRL). A compositionally biased stretch (low complexity) spans 51–74 (SSKPSSPDDGSSRAFAARASVPAA). A compositionally biased stretch (basic residues) spans 325 to 338 (KKYKKLMRRTRNER).

The protein belongs to the mitochondrion-specific ribosomal protein mS38 family. Component of the mitochondrial small ribosomal subunit (mt-SSU). Mature N.crassa 74S mitochondrial ribosomes consist of a small (37S) and a large (54S) subunit. The 37S small subunit contains a 16S ribosomal RNA (16S mt-rRNA) and 32 different proteins. The 54S large subunit contains a 23S rRNA (23S mt-rRNA) and 42 different proteins.

It localises to the mitochondrion. Its function is as follows. Component of the mitochondrial ribosome (mitoribosome), a dedicated translation machinery responsible for the synthesis of mitochondrial genome-encoded proteins, including at least some of the essential transmembrane subunits of the mitochondrial respiratory chain. The mitoribosomes are attached to the mitochondrial inner membrane and translation products are cotranslationally integrated into the membrane. This chain is Small ribosomal subunit protein mS38 (cox24), found in Neurospora crassa (strain ATCC 24698 / 74-OR23-1A / CBS 708.71 / DSM 1257 / FGSC 987).